Consider the following 440-residue polypeptide: MESQQLSQHPHISHGSACASVTSKEVHTNQDPLDVSASKTEECEKASTKANSQQTTTPASSAVPENPHHASPQPASVPPPQNGPYPQQCMMTQNQANPSGWSFYGHPSMIPYTPYQMSPMYFPPGPQSQFPQYPSSVGTPLSTPSPESGNTFTDSSSADSDMTSTKKYVRPPPMLTSPNDFPNWVKTYIKFLQNSNLGGIIPTVNGKPVRQITDDELTFLYNTFQIFAPSQFLPTWVKDILSVDYTDIMKILSKSIEKMQSDTQEANDIVTLANLQYNGSTPADAFETKVTNIIDRLNNNGIHINNKVACQLIMRGLSGEYKFLRYTRHRHLNMTVAELFLDIHAIYEEQQGSRNSKPNYRRNLSDEKNDSRSYTNTTKPKVIARNPQKTNNSKSKTARAHNVSTSNNSPSTDNDSISKSTTEPIQLNNKHDLHLRPGTY.

Polar residues-rich tracts occupy residues 1–10 (MESQQLSQHP), 48–60 (TKAN…TPAS), and 127–152 (QSQF…GNTF). Disordered regions lie at residues 1–93 (MESQ…MMTQ), 126–173 (PQSQ…RPPP), and 352–440 (GSRN…PGTY). Over residues 153–165 (TDSSSADSDMTST) the composition is skewed to low complexity. Residues 299-401 (NNGIHINNKV…NSKSKTARAH (103 aa)) form an RNA-binding region. Residues 402–418 (NVSTSNNSPSTDNDSIS) show a composition bias toward low complexity. Position 416 is a phosphoserine (S416). Residues 419 to 428 (KSTTEPIQLN) are compositionally biased toward polar residues. Over residues 429–440 (NKHDLHLRPGTY) the composition is skewed to basic and acidic residues.

As to quaternary structure, homotrimer.

Its subcellular location is the cytoplasm. Functionally, capsid protein (CA) is the structural component of the virus-like particle (VLP), forming the shell that encapsulates the retrotransposons dimeric RNA genome. The particles are assembled from trimer-clustered units and there are holes in the capsid shells that allow for the diffusion of macromolecules. CA also has nucleocapsid-like chaperone activity, promoting primer tRNA(i)-Met annealing to the multipartite primer-binding site (PBS), dimerization of Ty1 RNA and initiation of reverse transcription. In Saccharomyces cerevisiae (strain ATCC 204508 / S288c) (Baker's yeast), this protein is Transposon Ty1-LR4 Gag polyprotein (TY1A-LR4).